The chain runs to 319 residues: NADH-quinone oxidoreductase subunit H 1 (319 aa).

Transmembrane regions (helical) follow at residues 5–25, 78–98, 109–129, 147–167, 179–199, 214–234, 238–258, 262–282, and 294–314; these read ILTA…AGVF, LAPA…AFGE, VMFL…GALA, LAYE…AGSL, VWFI…GIAA, LVGG…FLGE, ILLV…GPWL, IWFG…RAAL, and AWKV…FIVV.

Belongs to the complex I subunit 1 family. In terms of assembly, NDH-1 is composed of 14 different subunits. Subunits NuoA, H, J, K, L, M, N constitute the membrane sector of the complex.

Its subcellular location is the cell inner membrane. The catalysed reaction is a quinone + NADH + 5 H(+)(in) = a quinol + NAD(+) + 4 H(+)(out). Functionally, NDH-1 shuttles electrons from NADH, via FMN and iron-sulfur (Fe-S) centers, to quinones in the respiratory chain. The immediate electron acceptor for the enzyme in this species is believed to be ubiquinone. Couples the redox reaction to proton translocation (for every two electrons transferred, four hydrogen ions are translocated across the cytoplasmic membrane), and thus conserves the redox energy in a proton gradient. This subunit may bind ubiquinone. The chain is NADH-quinone oxidoreductase subunit H 1 from Rhodopseudomonas palustris (strain BisA53).